The primary structure comprises 512 residues: Activin receptor type-2B (512 aa).

Residues 1 to 24 (MSASWLTLAVLCATLGAGPGHGEA) form the signal peptide. Residues 25–137 (ETRECIYYNA…PPPPTPSLLN (113 aa)) are Extracellular-facing. 5 disulfides stabilise this stretch: Cys29-Cys59, Cys49-Cys77, Cys84-Cys103, Cys90-Cys102, and Cys104-Cys109. Residues Asn42 and Asn65 are each glycosylated (N-linked (GlcNAc...) asparagine). Residues 138–158 (ILVYSLLPIAVLSVAILLAFW) form a helical membrane-spanning segment. Residues 159–512 (MYRHRKPPYG…VDLPPKESSI (354 aa)) are Cytoplasmic-facing. The 289-residue stretch at 190-478 (LQLLEIKARG…LSAGCVEERI (289 aa)) folds into the Protein kinase domain. Residues 196–204 (KARGRFGCV) and Lys217 each bind ATP. Asp321 functions as the Proton acceptor in the catalytic mechanism.

It belongs to the protein kinase superfamily. TKL Ser/Thr protein kinase family. TGFB receptor subfamily. It depends on Mg(2+) as a cofactor. Mn(2+) serves as cofactor. Not expressed in hen anterior pituitary during the ovulatory cycle but expressed in the ovarian follicle.

It localises to the membrane. The enzyme catalyses L-threonyl-[receptor-protein] + ATP = O-phospho-L-threonyl-[receptor-protein] + ADP + H(+). The catalysed reaction is L-seryl-[receptor-protein] + ATP = O-phospho-L-seryl-[receptor-protein] + ADP + H(+). Functionally, on ligand binding, forms a receptor complex consisting of two type II and two type I transmembrane serine/threonine kinases. Type II receptors phosphorylate and activate type I receptors which autophosphorylate, then bind and activate SMAD transcriptional regulators. Receptor for activin A, activin B and inhibin A. May modulate neuropeptide expression in dorsal root ganglia (DRG) neurons and ovarian follicle development. The protein is Activin receptor type-2B (ACVR2B) of Gallus gallus (Chicken).